A 196-amino-acid polypeptide reads, in one-letter code: Small ribosomal subunit protein uS4c (196 aa).

The segment at 15–41 (LGALPGLTSKRPRSGSDLKNPLRSGKR) is disordered. The S4 RNA-binding domain occupies 89 to 150 (MRLDNILFRL…KQRSKALIQN (62 aa)).

This sequence belongs to the universal ribosomal protein uS4 family. In terms of assembly, part of the 30S ribosomal subunit. Contacts protein S5. The interaction surface between S4 and S5 is involved in control of translational fidelity.

The protein resides in the plastid. It is found in the chloroplast. Its function is as follows. One of the primary rRNA binding proteins, it binds directly to 16S rRNA where it nucleates assembly of the body of the 30S subunit. Functionally, with S5 and S12 plays an important role in translational accuracy. This is Small ribosomal subunit protein uS4c (rps4) from Narcissus odorus (Campernelle jonquil).